A 394-amino-acid polypeptide reads, in one-letter code: Elongation factor Tu 1 (394 aa).

In terms of domain architecture, tr-type G spans 10–204; the sequence is KPHVNVGTIG…ALDTYIPEPE (195 aa). The G1 stretch occupies residues 19 to 26; that stretch reads GHVDHGKT. 19–26 is a GTP binding site; the sequence is GHVDHGKT. Thr26 contributes to the Mg(2+) binding site. The tract at residues 60–64 is G2; the sequence is GITIS. The segment at 81–84 is G3; the sequence is DCPG. Residues 81–85 and 136–139 each bind GTP; these read DCPGH and NKCD. A G4 region spans residues 136 to 139; the sequence is NKCD. The segment at 174 to 176 is G5; the sequence is SAL.

It belongs to the TRAFAC class translation factor GTPase superfamily. Classic translation factor GTPase family. EF-Tu/EF-1A subfamily. In terms of assembly, monomer.

It localises to the cytoplasm. It carries out the reaction GTP + H2O = GDP + phosphate + H(+). GTP hydrolase that promotes the GTP-dependent binding of aminoacyl-tRNA to the A-site of ribosomes during protein biosynthesis. This Vibrio vulnificus (strain CMCP6) protein is Elongation factor Tu 1.